The sequence spans 422 residues: F-box/FBD/LRR-repeat protein At5g56420 (422 aa).

Residues 5-54 form the F-box domain; the sequence is RDRLSQLPDDFLLQILSWLPTKDVLVTSLLSKRWRFLWTLVPRLNYDLRL. LRR repeat units follow at residues 59–85, 136–163, 164–189, 193–212, 214–238, 279–304, and 305–330; these read CPRFSQFVDRSLLLHKAPTLESLNIKI, VLKLENITLEDASCYVCFQSLKTLHLLD, VKYLDDQSLPRIISSCSSLEDLVVQR, DNVKVVTVTAPSLKTLSLHK, SQAFEGDDDGFLIDTPKLKRVDIED, LCLITSDAAYPAGTIFSQLVHLELCT, and CAPRWWDLLTRLIEDSPKLRVLKLRQ. Residues 342–391 enclose the FBD domain; that stretch reads SWKQPALPKCLLFHLETFKWELYEGSQKQKEVATFILKHAIRLKTAIISP.

In Arabidopsis thaliana (Mouse-ear cress), this protein is F-box/FBD/LRR-repeat protein At5g56420.